Here is a 573-residue protein sequence, read N- to C-terminus: Protein DML1 (573 aa).

Belongs to the misato family.

It is found in the mitochondrion. Functionally, involved in the partitioning of the mitochondrial organelle and mitochondrial DNA (mtDNA) inheritance. In Candida albicans (strain SC5314 / ATCC MYA-2876) (Yeast), this protein is Protein DML1 (DML1).